Here is a 79-residue protein sequence, read N- to C-terminus: U-actitoxin-Avd8a (79 aa).

A signal peptide spans 1-19 (MKSLVIVFVVLLGVAMISA). A propeptide spanning residues 20 to 36 (NEEELLAILQDQRNDAR) is cleaved from the precursor.

This sequence belongs to the sea anemone 8 toxin family.

The protein resides in the secreted. It is found in the nematocyst. This Anemonia viridis (Snakelocks anemone) protein is U-actitoxin-Avd8a.